The sequence spans 356 residues: Glutamine synthetase N-1 (356 aa).

The GS beta-grasp domain occupies 19 to 99 (VIAEYIWVGG…VMCDAYTPAG (81 aa)). The 251-residue stretch at 106-356 (KRHNAAKIFS…IAETTLLWKP (251 aa)) folds into the GS catalytic domain.

It belongs to the glutamine synthetase family. As to quaternary structure, homooctamer. This is a nodule isozyme.

It is found in the cytoplasm. The enzyme catalyses L-glutamate + NH4(+) + ATP = L-glutamine + ADP + phosphate + H(+). The sequence is that of Glutamine synthetase N-1 (Gln-gamma) from Phaseolus vulgaris (Kidney bean).